Reading from the N-terminus, the 313-residue chain is MRMSAPELIRIVSRDSPMALAQVERVRAELAALHPGVRTEVVPVRTTGDKWLGDLSQVEGKGAFTKEVDAALLSGEADLAVHCVKDVPADRPLPAGTVFAAFLKRDDVRDALVHPDGLTLDELPDGTRVGTSSVRRVAQLAATHPHLRCVPFRGNANRRLAKLAAGEADALLLAVSGLERIGRTDVISEVLSTETMMPPIGAGILALQCREGDRALIEAVSALGDPRTHREATAERMFLHVLQGHCNSPIAGHAQVDRSGELSLRACVFTPDGKVRLNAHEWAGRLDPATLGTSVAVALLRQGAREIIDGIAH.

Cys-246 is subject to S-(dipyrrolylmethanemethyl)cysteine.

This sequence belongs to the HMBS family. In terms of assembly, monomer. The cofactor is dipyrromethane.

The catalysed reaction is 4 porphobilinogen + H2O = hydroxymethylbilane + 4 NH4(+). The protein operates within porphyrin-containing compound metabolism; protoporphyrin-IX biosynthesis; coproporphyrinogen-III from 5-aminolevulinate: step 2/4. Tetrapolymerization of the monopyrrole PBG into the hydroxymethylbilane pre-uroporphyrinogen in several discrete steps. In Streptomyces coelicolor (strain ATCC BAA-471 / A3(2) / M145), this protein is Porphobilinogen deaminase 2 (hemC2).